We begin with the raw amino-acid sequence, 450 residues long: Nicotinamide phosphoribosyltransferase (450 aa).

R210 contributes to the diphosphate binding site. D233 serves as a coordination point for beta-nicotinamide D-ribonucleotide. The diphosphate site is built by H249 and R310. Beta-nicotinamide D-ribonucleotide-binding positions include R310–D312, G364–D365, and R403.

It belongs to the NAPRTase family.

It catalyses the reaction beta-nicotinamide D-ribonucleotide + diphosphate = 5-phospho-alpha-D-ribose 1-diphosphate + nicotinamide + H(+). It participates in cofactor biosynthesis; NAD(+) biosynthesis; nicotinamide D-ribonucleotide from 5-phospho-alpha-D-ribose 1-diphosphate and nicotinamide: step 1/1. Its function is as follows. Catalyzes the condensation of nicotinamide with 5-phosphoribosyl-1-pyrophosphate to yield nicotinamide mononucleotide, an intermediate in the biosynthesis of NAD. This chain is Nicotinamide phosphoribosyltransferase, found in Mycoplasma genitalium (strain ATCC 33530 / DSM 19775 / NCTC 10195 / G37) (Mycoplasmoides genitalium).